The chain runs to 210 residues: Protein SYM1 (210 aa).

The next 4 helical transmembrane spans lie at 22-39, 68-84, 112-129, and 173-189; these read IMTG…QLLF, AVVY…DRWY, LGFA…MSLL, and LLAA…FLSY.

It belongs to the peroxisomal membrane protein PXMP2/4 family.

Its subcellular location is the mitochondrion inner membrane. Functionally, may be involved in cellular response to stress. Required to maintain mitochondrial DNA (mtDNA) integrity and stability. This Candida glabrata (strain ATCC 2001 / BCRC 20586 / JCM 3761 / NBRC 0622 / NRRL Y-65 / CBS 138) (Yeast) protein is Protein SYM1 (SYM1).